The primary structure comprises 173 residues: Adenine phosphoribosyltransferase (173 aa).

This sequence belongs to the purine/pyrimidine phosphoribosyltransferase family. Homodimer.

It is found in the cytoplasm. It carries out the reaction AMP + diphosphate = 5-phospho-alpha-D-ribose 1-diphosphate + adenine. Its pathway is purine metabolism; AMP biosynthesis via salvage pathway; AMP from adenine: step 1/1. Functionally, catalyzes a salvage reaction resulting in the formation of AMP, that is energically less costly than de novo synthesis. This Thermotoga maritima (strain ATCC 43589 / DSM 3109 / JCM 10099 / NBRC 100826 / MSB8) protein is Adenine phosphoribosyltransferase.